The following is a 232-amino-acid chain: MLKPSVTSAPTADMATLTVVQPLTLDRDVARAIELLEKLQESGEVPVHKLQSLKKVLQSEFCTAIREVYQYMHETITVNGCPEFRARATAKATVAAFAASEGHSHPRVVELPKTDEGLGFNVMGGKEQNSPIYISRIIPGGVAERHGGLKRGDQLLSVNGVSVEGEHHEKAVELLKAAKDSVKLVVRYTPKVLEEMEARFEKLRTARRRQQQQLLIQQQQQQQQQPQQNHMS.

A Kinase interacting site motif is present at residues 14 to 28 (MATLTVVQPLTLDRD). In terms of domain architecture, L27 spans 25-80 (LDRDVARAIELLEKLQESGEVPVHKLQSLKKVLQSEFCTAIREVYQYMHETITVNG). The PDZ domain maps to 108–190 (VVELPKTDEG…SVKLVVRYTP (83 aa)).

It belongs to the lin-7 family. As to quaternary structure, forms a complex with CASK and CASKIN1. Component of the brain-specific heterotrimeric complex (LIN-10-LIN-2-LIN-7 complex) composed of at least APBA1, CASK, and LIN7, which associates with the motor protein KIF17 to transport vesicles along microtubules. Can also interact with other modular proteins containing protein-protein interaction domains like PALS1, PALS2, MPP7, DLG1, DLG2 and DLG3 through its L27 domain. Interacts with DLG4 and GRIN2B as well as CDH1 and CTNNB1, the channels KCNJ12/Kir2.2, KCNJ4/Kir2.3 and probably KCNJ2/Kir2.1 and SLC6A12/BGT-1 via its PDZ domain. The association of LIN7A with cadherin and beta-catenin is calcium-dependent, occurs at synaptic junctions and requires the actin cytoskeleton. Interacts with EGFR, ERBB2, ERBB3 and ERBB4 with both PDZ and KID domains. Associates with KIF17 via APBA1. Interacts with HTR4. Forms a tripartite complex composed of DLG1, MPP7 and LIN7 (LIN7A or LIN7C). Interacts with MARCHF11. Ubiquitously expressed in brain and detected in lung, liver and testis (at protein level). Expression was detected only in brain.

The protein localises to the cell membrane. Its subcellular location is the basolateral cell membrane. It localises to the cell junction. The protein resides in the postsynaptic density membrane. It is found in the tight junction. Its function is as follows. Plays a role in establishing and maintaining the asymmetric distribution of channels and receptors at the plasma membrane of polarized cells. Forms membrane-associated multiprotein complexes that may regulate delivery and recycling of proteins to the correct membrane domains. The tripartite complex composed of LIN7 (LIN7A, LIN7B or LIN7C), CASK and APBA1 associates with the motor protein KIF17 to transport vesicles containing N-methyl-D-aspartate (NMDA) receptor subunit NR2B along microtubules. This complex may have the potential to couple synaptic vesicle exocytosis to cell adhesion in brain. Ensures the proper localization of GRIN2B (subunit 2B of the NMDA receptor) to neuronal postsynaptic density and may function in localizing synaptic vesicles at synapses where it is recruited by beta-catenin and cadherin. Required to localize Kir2 channels, GABA transporter (SLC6A12) and EGFR/ERBB1, ERBB2, ERBB3 and ERBB4 to the basolateral membrane of epithelial cells. In Rattus norvegicus (Rat), this protein is Protein lin-7 homolog A (Lin7a).